The sequence spans 412 residues: Serine hydroxymethyltransferase (412 aa).

Residues Leu-117 and 121–123 contribute to the (6S)-5,6,7,8-tetrahydrofolate site; that span reads GHL. At Lys-226 the chain carries N6-(pyridoxal phosphate)lysine. Residue 349-351 participates in (6S)-5,6,7,8-tetrahydrofolate binding; it reads SPF.

This sequence belongs to the SHMT family. As to quaternary structure, homodimer. Pyridoxal 5'-phosphate serves as cofactor.

The protein localises to the cytoplasm. The catalysed reaction is (6R)-5,10-methylene-5,6,7,8-tetrahydrofolate + glycine + H2O = (6S)-5,6,7,8-tetrahydrofolate + L-serine. It participates in one-carbon metabolism; tetrahydrofolate interconversion. It functions in the pathway amino-acid biosynthesis; glycine biosynthesis; glycine from L-serine: step 1/1. In terms of biological role, catalyzes the reversible interconversion of serine and glycine with tetrahydrofolate (THF) serving as the one-carbon carrier. This reaction serves as the major source of one-carbon groups required for the biosynthesis of purines, thymidylate, methionine, and other important biomolecules. Also exhibits THF-independent aldolase activity toward beta-hydroxyamino acids, producing glycine and aldehydes, via a retro-aldol mechanism. The protein is Serine hydroxymethyltransferase of Nitratidesulfovibrio vulgaris (strain DSM 19637 / Miyazaki F) (Desulfovibrio vulgaris).